The chain runs to 605 residues: Endonuclease 8-like 3 (605 aa).

Val2 functions as the Schiff-base intermediate with DNA; via amino nitrogen in the catalytic mechanism. Asn192 and Arg271 together coordinate DNA. Residues 247 to 281 (KVYKRPNCGQCHCRITVCRFGDNNRMTYFCPHCQK) form an FPG-type zinc finger. The RanBP2-type zinc finger occupies 317–346 (SEEHWTCVVCTLINKPSSKACDACLTSRPI). Ser450 is modified (phosphoserine). Residues 456 to 477 (ESKLFSPAHKKPKTAQYSSPEL) are disordered. Cys507, His510, Cys533, Cys541, Cys554, His556, Cys579, and Cys587 together coordinate Zn(2+). GRF-type zinc fingers lie at residues 507–550 (CSKH…ADLS) and 554–596 (CNHG…AENG).

This sequence belongs to the FPG family. As to expression, expressed in keratinocytes and embryonic fibroblasts (at protein level). Also detected in thymus, testis and fetal lung primary fibroblasts.

It localises to the nucleus. The protein resides in the chromosome. The enzyme catalyses 2'-deoxyribonucleotide-(2'-deoxyribose 5'-phosphate)-2'-deoxyribonucleotide-DNA = a 3'-end 2'-deoxyribonucleotide-(2,3-dehydro-2,3-deoxyribose 5'-phosphate)-DNA + a 5'-end 5'-phospho-2'-deoxyribonucleoside-DNA + H(+). Functionally, DNA glycosylase which prefers single-stranded DNA (ssDNA), or partially ssDNA structures such as bubble and fork structures, to double-stranded DNA (dsDNA). Mediates interstrand cross-link repair in response to replication stress: acts by mediating DNA glycosylase activity, cleaving one of the two N-glycosyl bonds comprising the interstrand cross-link, which avoids the formation of a double-strand break but generates an abasic site that is bypassed by translesion synthesis polymerases. In vitro, displays strong glycosylase activity towards the hydantoin lesions spiroiminodihydantoin (Sp) and guanidinohydantoin (Gh) in both ssDNA and dsDNA; also recognizes FapyA, FapyG, 5-OHU, 5-OHC, 5-OHMH, Tg and 8-oxoA lesions in ssDNA. No activity on 8-oxoG detected. Also shows weak DNA-(apurinic or apyrimidinic site) lyase activity. In vivo, appears to be the primary enzyme involved in removing Sp and Gh from ssDNA in neonatal tissues. This chain is Endonuclease 8-like 3 (NEIL3), found in Homo sapiens (Human).